Reading from the N-terminus, the 67-residue chain is ATP synthase F(0) complex subunit 8 (67 aa).

The helical transmembrane segment at 8-24 (TWFITITSMIMTLFILF) threads the bilayer. An N6-acetyllysine; alternate modification is found at Lys54. Lys54 bears the N6-succinyllysine; alternate mark. At Lys57 the chain carries N6-acetyllysine.

This sequence belongs to the ATPase protein 8 family. In terms of assembly, component of the ATP synthase complex composed at least of ATP5F1A/subunit alpha, ATP5F1B/subunit beta, ATP5MC1/subunit c (homooctomer), MT-ATP6/subunit a, MT-ATP8/subunit 8, ATP5ME/subunit e, ATP5MF/subunit f, ATP5MG/subunit g, ATP5MK/subunit k, ATP5MJ/subunit j, ATP5F1C/subunit gamma, ATP5F1D/subunit delta, ATP5F1E/subunit epsilon, ATP5PF/subunit F6, ATP5PB/subunit b, ATP5PD/subunit d, ATP5PO/subunit OSCP. ATP synthase complex consists of a soluble F(1) head domain (subunits alpha(3) and beta(3)) - the catalytic core - and a membrane F(0) domain - the membrane proton channel (subunits c, a, 8, e, f, g, k and j). These two domains are linked by a central stalk (subunits gamma, delta, and epsilon) rotating inside the F1 region and a stationary peripheral stalk (subunits F6, b, d, and OSCP). Interacts with PRICKLE3.

The protein resides in the mitochondrion membrane. Functionally, subunit 8, of the mitochondrial membrane ATP synthase complex (F(1)F(0) ATP synthase or Complex V) that produces ATP from ADP in the presence of a proton gradient across the membrane which is generated by electron transport complexes of the respiratory chain. ATP synthase complex consist of a soluble F(1) head domain - the catalytic core - and a membrane F(1) domain - the membrane proton channel. These two domains are linked by a central stalk rotating inside the F(1) region and a stationary peripheral stalk. During catalysis, ATP synthesis in the catalytic domain of F(1) is coupled via a rotary mechanism of the central stalk subunits to proton translocation. In vivo, can only synthesize ATP although its ATP hydrolase activity can be activated artificially in vitro. Part of the complex F(0) domain. The protein is ATP synthase F(0) complex subunit 8 of Sus scrofa (Pig).